The sequence spans 159 residues: H/ACA ribonucleoprotein complex subunit 2-like protein (159 aa).

Residues 1–28 (MAKTPKKDKTEEKEEHEESGGNKEDRER) are disordered.

Belongs to the eukaryotic ribosomal protein eL8 family. In terms of assembly, component of the small nucleolar ribonucleoprotein particle containing H/ACA-type snoRNAs (H/ACA snoRNPs). Component of the telomerase holoenzyme complex.

It localises to the nucleus. It is found in the nucleolus. In terms of biological role, required for ribosome biogenesis. Part of a complex which catalyzes pseudouridylation of rRNA. This involves the isomerization of uridine such that the ribose is subsequently attached to C5, instead of the normal N1. Pseudouridine ('psi') residues may serve to stabilize the conformation of rRNAs. The sequence is that of H/ACA ribonucleoprotein complex subunit 2-like protein from Branchiostoma belcheri (Amphioxus).